The following is a 120-amino-acid chain: Large ribosomal subunit protein eL18 (120 aa).

It belongs to the eukaryotic ribosomal protein eL18 family.

The sequence is that of Large ribosomal subunit protein eL18 from Pyrococcus horikoshii (strain ATCC 700860 / DSM 12428 / JCM 9974 / NBRC 100139 / OT-3).